The primary structure comprises 627 residues: DNA mismatch repair protein MutL (627 aa).

Residues 363 to 397 are disordered; sequence FAEPAAREPVAPRYSPAPASGSRPAAPWPNAQPGY. Over residues 364-387 the composition is skewed to low complexity; sequence AEPAAREPVAPRYSPAPASGSRPA.

It belongs to the DNA mismatch repair MutL/HexB family.

Functionally, this protein is involved in the repair of mismatches in DNA. It is required for dam-dependent methyl-directed DNA mismatch repair. May act as a 'molecular matchmaker', a protein that promotes the formation of a stable complex between two or more DNA-binding proteins in an ATP-dependent manner without itself being part of a final effector complex. This Shigella flexneri serotype 5b (strain 8401) protein is DNA mismatch repair protein MutL.